The following is a 263-amino-acid chain: Small ribosomal subunit protein uS3 (263 aa).

Residues 39–107 (VREYLKKKLK…PVHVNIEEIR (69 aa)) form the KH type-2 domain. Positions 211-263 (GELPPEAATPREEERRPRRAPRGDRPDGGRPGRPGGRGRGPRKADAAPAPEGE) are disordered. Basic and acidic residues predominate over residues 219-240 (TPREEERRPRRAPRGDRPDGGR).

The protein belongs to the universal ribosomal protein uS3 family. Part of the 30S ribosomal subunit. Forms a tight complex with proteins S10 and S14.

Functionally, binds the lower part of the 30S subunit head. Binds mRNA in the 70S ribosome, positioning it for translation. This is Small ribosomal subunit protein uS3 from Bordetella petrii (strain ATCC BAA-461 / DSM 12804 / CCUG 43448).